A 305-amino-acid chain; its full sequence is Ribosomal RNA small subunit methyltransferase H (305 aa).

Residues 47 to 49 (GGH), D66, F93, D108, and Q115 contribute to the S-adenosyl-L-methionine site. A disordered region spans residues 279-305 (ADSNEKLNNPRSRSAKLRLAKKRNPNE). Positions 291-305 (RSAKLRLAKKRNPNE) are enriched in basic residues.

The protein belongs to the methyltransferase superfamily. RsmH family.

The protein localises to the cytoplasm. It carries out the reaction cytidine(1402) in 16S rRNA + S-adenosyl-L-methionine = N(4)-methylcytidine(1402) in 16S rRNA + S-adenosyl-L-homocysteine + H(+). Functionally, specifically methylates the N4 position of cytidine in position 1402 (C1402) of 16S rRNA. This is Ribosomal RNA small subunit methyltransferase H from Prochlorococcus marinus (strain SARG / CCMP1375 / SS120).